The chain runs to 225 residues: MSSLHKFKAYFGMVPLDDYEDEYLDEPEPARRPARPARDSGRDPYLDRDDRDFAEPAFSKAAYAPGRRDDLDDDFDRYDGPRHSSRVEPVAVRSARPSASGAVRGSTRGALAVDTRSERVESRRGPLFDEGGPLSKITTLRPRDYGEARTIGERFRDGTPVIMDLVEMSNADAKRLVDFAAGLAFALRGSFDKVATKVFLLSPADIDVSAEERRRIAETGFYSQK.

The tract at residues 22–116 (EYLDEPEPAR…TRGALAVDTR (95 aa)) is disordered. Composition is skewed to basic and acidic residues over residues 28–54 (EPAR…RDFA) and 77–86 (RYDGPRHSSR).

It belongs to the SepF family. Homodimer. Interacts with FtsZ.

The protein resides in the cytoplasm. Cell division protein that is part of the divisome complex and is recruited early to the Z-ring. Probably stimulates Z-ring formation, perhaps through the cross-linking of FtsZ protofilaments. Its function overlaps with FtsA. The protein is Cell division protein SepF of Rhodococcus jostii (strain RHA1).